A 380-amino-acid polypeptide reads, in one-letter code: Queuine tRNA-ribosyltransferase (380 aa).

D96 acts as the Proton acceptor in catalysis. Residues 96–100, D150, Q193, and G220 contribute to the substrate site; that span reads DSGGF. Residues 251 to 257 form an RNA binding region; that stretch reads GVGAPDS. Residue D270 is the Nucleophile of the active site. The segment at 275–279 is RNA binding; important for wobble base 34 recognition; that stretch reads TRIAR. Positions 308, 310, 313, and 339 each coordinate Zn(2+).

It belongs to the queuine tRNA-ribosyltransferase family. As to quaternary structure, homodimer. Within each dimer, one monomer is responsible for RNA recognition and catalysis, while the other monomer binds to the replacement base PreQ1. The cofactor is Zn(2+).

The catalysed reaction is 7-aminomethyl-7-carbaguanine + guanosine(34) in tRNA = 7-aminomethyl-7-carbaguanosine(34) in tRNA + guanine. It participates in tRNA modification; tRNA-queuosine biosynthesis. Catalyzes the base-exchange of a guanine (G) residue with the queuine precursor 7-aminomethyl-7-deazaguanine (PreQ1) at position 34 (anticodon wobble position) in tRNAs with GU(N) anticodons (tRNA-Asp, -Asn, -His and -Tyr). Catalysis occurs through a double-displacement mechanism. The nucleophile active site attacks the C1' of nucleotide 34 to detach the guanine base from the RNA, forming a covalent enzyme-RNA intermediate. The proton acceptor active site deprotonates the incoming PreQ1, allowing a nucleophilic attack on the C1' of the ribose to form the product. After dissociation, two additional enzymatic reactions on the tRNA convert PreQ1 to queuine (Q), resulting in the hypermodified nucleoside queuosine (7-(((4,5-cis-dihydroxy-2-cyclopenten-1-yl)amino)methyl)-7-deazaguanosine). In Streptococcus suis (strain 98HAH33), this protein is Queuine tRNA-ribosyltransferase.